The primary structure comprises 546 residues: Smad protein daf-8 (546 aa).

Positions 16–137 constitute an MH1 domain; that stretch reads AMAQKVLEET…YRWVELPTCQ (122 aa). Disordered stretches follow at residues 234–268 and 292–317; these read LQQSNRQDDEEPGYYRSGLSSPASHAASPREFIPN and ENFSSENNGNRKPTYADGRPITPIEP. Residues 292 to 302 are compositionally biased toward polar residues; sequence ENFSSENNGNR. An MH2 domain is found at 349-546; sequence WLKLIYYEEG…APPRICSSRT (198 aa).

It belongs to the dwarfin/SMAD family. In terms of assembly, homodimer. Interacts with R-SMAD daf-14 and co-SMAD daf-3. Interacts with orphan nuclear receptor nhr-69. In terms of tissue distribution, expressed in the excretory cell and gonadal distal tip cells (DTCs).

It localises to the cytoplasm. The protein localises to the nucleus. In terms of biological role, probably a receptor-regulated SMAD (R-SMAD) that is an intracellular signal transducer and transcriptional modulator activated by TGF-beta-like daf-7 signaling. Plays a role in TGF-beta-like daf-7 signaling in regulating entry into a developmentally arrested larval state known as dauer, in response to harsh environmental conditions; partially redundant with R-SMAD daf-14. Plays a role in inhibiting mitosis and promoting a switch to meiosis in the germ line, perhaps by down-regulating lag-2 transcription in the gonadal distal tip cells (DTCs). In cooperation with orphan nuclear receptor nhr-69 modulates the Insulin/IGF-1-like signaling (IIS) pathway, perhaps by regulating expression of the potassium channel exp-2, which in turn modulates the secretion of the insulin-like peptide daf-28. This chain is Smad protein daf-8, found in Caenorhabditis elegans.